A 159-amino-acid polypeptide reads, in one-letter code: Transcriptional repressor NrdR (159 aa).

Residues 3 to 34 fold into a zinc finger; it reads CPYCQSEDTQVKDSRPAEDGAAIRRRRVCPDC. In terms of domain architecture, ATP-cone spans 49 to 139; the sequence is LVVVKKSGRK…VYRNFREAKD (91 aa).

This sequence belongs to the NrdR family. Zn(2+) serves as cofactor.

Negatively regulates transcription of bacterial ribonucleotide reductase nrd genes and operons by binding to NrdR-boxes. This is Transcriptional repressor NrdR from Mesorhizobium japonicum (strain LMG 29417 / CECT 9101 / MAFF 303099) (Mesorhizobium loti (strain MAFF 303099)).